Here is an 87-residue protein sequence, read N- to C-terminus: Small ribosomal subunit protein eS21 (87 aa).

This sequence belongs to the eukaryotic ribosomal protein eS21 family. In terms of assembly, component of the small ribosomal subunit. Mature ribosomes consist of a small (40S) and a large (60S) subunit. The 40S subunit contains about 33 different proteins and 1 molecule of RNA (18S). The 60S subunit contains about 49 different proteins and 3 molecules of RNA (25S, 5.8S and 5S).

It localises to the cytoplasm. Functionally, required for the processing of the 20S rRNA-precursor to mature 18S rRNA in a late step of the maturation of 40S ribosomal subunits. Has a physiological role leading to 18S rRNA stability. In Eremothecium gossypii (strain ATCC 10895 / CBS 109.51 / FGSC 9923 / NRRL Y-1056) (Yeast), this protein is Small ribosomal subunit protein eS21 (RPS21).